The primary structure comprises 567 residues: Dihydroxy-acid dehydratase 1 (567 aa).

Cys57 contributes to the [2Fe-2S] cluster binding site. Asp89 contacts Mg(2+). Cys130 is a [2Fe-2S] cluster binding site. Asp131 and Lys132 together coordinate Mg(2+). The residue at position 132 (Lys132) is an N6-carboxylysine. [2Fe-2S] cluster is bound at residue Cys202. Glu454 serves as a coordination point for Mg(2+). Ser480 functions as the Proton acceptor in the catalytic mechanism.

Belongs to the IlvD/Edd family. In terms of assembly, homodimer. [2Fe-2S] cluster is required as a cofactor. The cofactor is Mg(2+).

It catalyses the reaction (2R)-2,3-dihydroxy-3-methylbutanoate = 3-methyl-2-oxobutanoate + H2O. The enzyme catalyses (2R,3R)-2,3-dihydroxy-3-methylpentanoate = (S)-3-methyl-2-oxopentanoate + H2O. The protein operates within amino-acid biosynthesis; L-isoleucine biosynthesis; L-isoleucine from 2-oxobutanoate: step 3/4. It functions in the pathway amino-acid biosynthesis; L-valine biosynthesis; L-valine from pyruvate: step 3/4. Functionally, functions in the biosynthesis of branched-chain amino acids. Catalyzes the dehydration of (2R,3R)-2,3-dihydroxy-3-methylpentanoate (2,3-dihydroxy-3-methylvalerate) into 2-oxo-3-methylpentanoate (2-oxo-3-methylvalerate) and of (2R)-2,3-dihydroxy-3-methylbutanoate (2,3-dihydroxyisovalerate) into 2-oxo-3-methylbutanoate (2-oxoisovalerate), the penultimate precursor to L-isoleucine and L-valine, respectively. This Aromatoleum aromaticum (strain DSM 19018 / LMG 30748 / EbN1) (Azoarcus sp. (strain EbN1)) protein is Dihydroxy-acid dehydratase 1.